Reading from the N-terminus, the 658-residue chain is Protein cueball (658 aa).

At 1–543 (MSGVTARMEN…SYCKNSFNRT (543 aa)) the chain is on the extracellular side. N-linked (GlcNAc...) asparagine glycosylation is found at asparagine 25 and asparagine 122. 3 LDL-receptor class B repeats span residues 100–142 (RKLY…NHDL), 152–195 (RHLY…DHYS), and 196–241 (NRIY…NSRY). 3 EGF-like domains span residues 352 to 384 (EIPICNNYCVHGKCVIGRDNRPTCECDAKFEGE), 387 to 422 (DRSKCDGFCLNSGNCSFSDATATCACPKNFSGKRCE), and 458 to 495 (EEYTCNNYCLNDGKCVLNNETMLVECRCGAEYTGKRCE). Intrachain disulfides connect cysteine 356–cysteine 365, cysteine 360–cysteine 375, cysteine 391–cysteine 401, cysteine 395–cysteine 410, cysteine 412–cysteine 421, cysteine 462–cysteine 472, cysteine 466–cysteine 483, and cysteine 485–cysteine 494. N-linked (GlcNAc...) asparagine glycosylation is found at asparagine 400 and asparagine 415. Residue asparagine 476 is glycosylated (N-linked (GlcNAc...) asparagine). An N-linked (GlcNAc...) asparagine glycan is attached at asparagine 541. The chain crosses the membrane as a helical span at residues 544-564 (VVYASLAFAASLFILMVILLI). At 565-658 (VRRFYEEGRP…SCAGGDKNLP (94 aa)) the chain is on the cytoplasmic side.

Belongs to the cueball family.

The protein resides in the cell membrane. Functionally, has a role in spermatogenesis and oogenesis. The chain is Protein cueball from Culex quinquefasciatus (Southern house mosquito).